A 162-amino-acid chain; its full sequence is SsrA-binding protein (162 aa).

Residues 140–162 (DKRETAAKRDWSRQKSRLMKDHG) are disordered.

Belongs to the SmpB family.

The protein resides in the cytoplasm. Functionally, required for rescue of stalled ribosomes mediated by trans-translation. Binds to transfer-messenger RNA (tmRNA), required for stable association of tmRNA with ribosomes. tmRNA and SmpB together mimic tRNA shape, replacing the anticodon stem-loop with SmpB. tmRNA is encoded by the ssrA gene; the 2 termini fold to resemble tRNA(Ala) and it encodes a 'tag peptide', a short internal open reading frame. During trans-translation Ala-aminoacylated tmRNA acts like a tRNA, entering the A-site of stalled ribosomes, displacing the stalled mRNA. The ribosome then switches to translate the ORF on the tmRNA; the nascent peptide is terminated with the 'tag peptide' encoded by the tmRNA and targeted for degradation. The ribosome is freed to recommence translation, which seems to be the essential function of trans-translation. The protein is SsrA-binding protein of Roseobacter denitrificans (strain ATCC 33942 / OCh 114) (Erythrobacter sp. (strain OCh 114)).